The primary structure comprises 380 residues: Rab9 effector protein with kelch motifs (380 aa).

Kelch repeat units follow at residues 57–103 (KIFI…FLPS), 108–154 (SIWV…TSSA), 159–211 (QLYV…AAGT), 212–258 (KLFI…AAVA), 262–311 (HVYM…VIPW), and 357–380 (LCFVFGGMNTEGEVYDDCLVTVVD).

Interacts with PIKFYVE; the interaction recruits RABEPK to the endosomal membrane. Interacts with RAB9 in its GTP-bound conformation. Post-translationally, phosphorylated on Ser residues by PIKFYVE.

Its subcellular location is the cytoplasm. The protein resides in the endosome membrane. Rab9 effector required for endosome to trans-Golgi network (TGN) transport. This Mus musculus (Mouse) protein is Rab9 effector protein with kelch motifs.